The sequence spans 400 residues: WW domain-containing transcription regulator protein 1 (400 aa).

A Glycyl lysine isopeptide (Lys-Gly) (interchain with G-Cter in ubiquitin) cross-link involves residue Lys-46. Residues 52-117 (FFKEPDSGSH…QQHAHLRQQS (66 aa)) are disordered. The segment covering 61–70 (HSRQSSTDSS) has biased composition (polar residues). Ser-62 is modified (phosphoserine). Ser-89 carries the phosphoserine; by LATS2 modification. The residue at position 105 (Ser-105) is a Phosphoserine. One can recognise a WW domain in the interval 124 to 157 (LPLPPGWEMTFTATGQRYFLNHIEKITTWQDPRK). A required for interaction with PALS1 region spans residues 222–400 (PNALTTQQQQ…NKSEPFLTWL (179 aa)). Positions 225-259 (LTTQQQQQQKLRLQRIQMERERIRMRQEELMRQEA) form a coiled coil. Ser-295 is subject to Phosphoserine. Phosphoserine; by LATS2 is present on Ser-311. Residues 394–400 (EPFLTWL) carry the PDZ-binding motif.

As to quaternary structure, binds to SLC9A3R2 via the PDZ motif at the plasma membrane. Binds to YWHAZ in vivo and in vitro through the phosphoserine-binding motif RSHSSP. Interacts (via coiled-coil domain) with SMAD2 (via MH1 domain), SMAD3 and SMAD4. Interacts with MED15. Interacts with PAX8 and NKX2-1. Interacts with TEAD1, TEAD2, TEAD3 and TEAD4. Interacts (via WW domain) with PALS1. Interacts with LATS1. Interacts with YAP1 (when phosphorylated at 'Ser-127'). Interacts (via WW domain) with PRRG4 (via cytoplasmic domain). Interacts (via WW domain) with AMOTL2 (via PPXY motif); the interaction promotes WWTR1/TAZ localization to the cytoplasm and tight junctions, thereby inhibiting its transcriptional coactivator properties. Interacts (via WW domain) with AMOT isoform 1; the interaction facilitates translocation of WWTR1/TAZ to the cytoplasm. In terms of processing, phosphorylated by LATS2 and STK3/MST2. Phosphorylation by LATS2 results in creation of 14-3-3 binding sites, retention in the cytoplasm, and functional inactivation. Phosphorylation results in the inhibition of transcriptional coactivation through YWHAZ-mediated nuclear export. Phosphorylated in the nucleus by PRP4K; phosphorylation leads to nuclear exclusion. Ubiquitinated at Lys-46; leading to proteasomal degradation. Deubiquitinated and stabilized by UCHL1 at Lys-46; leading to inhibition of osteoclastogenesis. Highly expressed in kidney, heart, placenta and lung. Expressed in the thyroid tissue.

Its subcellular location is the nucleus. It is found in the cytoplasm. The protein localises to the cell membrane. The protein resides in the cell junction. It localises to the tight junction. Transcriptional coactivator which acts as a downstream regulatory target in the Hippo signaling pathway that plays a pivotal role in organ size control and tumor suppression by restricting proliferation and promoting apoptosis. The core of this pathway is composed of a kinase cascade wherein STK3/MST2 and STK4/MST1, in complex with its regulatory protein SAV1, phosphorylates and activates LATS1/2 in complex with its regulatory protein MOB1, which in turn phosphorylates and inactivates YAP1 oncoprotein and WWTR1/TAZ. WWTR1 enhances PAX8 and NKX2-1/TTF1-dependent gene activation. In conjunction with YAP1, involved in the regulation of TGFB1-dependent SMAD2 and SMAD3 nuclear accumulation. Plays a key role in coupling SMADs to the transcriptional machinery such as the mediator complex. Regulates embryonic stem-cell self-renewal, promotes cell proliferation and epithelial-mesenchymal transition. The chain is WW domain-containing transcription regulator protein 1 from Homo sapiens (Human).